Consider the following 155-residue polypeptide: DNA gyrase inhibitor (155 aa).

The protein belongs to the DNA gyrase inhibitor family. In terms of assembly, interacts with DNA gyrase.

The protein localises to the cytoplasm. Inhibits the supercoiling activity of DNA gyrase. Acts by inhibiting DNA gyrase at an early step, prior to (or at the step of) binding of DNA by the gyrase. It protects cells against toxins that target DNA gyrase, by inhibiting activity of these toxins and reducing the formation of lethal double-strand breaks in the cell. This chain is DNA gyrase inhibitor, found in Edwardsiella ictaluri (strain 93-146).